A 103-amino-acid polypeptide reads, in one-letter code: Pyrimidine/purine nucleoside phosphorylase (103 aa).

The protein belongs to the nucleoside phosphorylase PpnP family.

The enzyme catalyses a purine D-ribonucleoside + phosphate = a purine nucleobase + alpha-D-ribose 1-phosphate. The catalysed reaction is adenosine + phosphate = alpha-D-ribose 1-phosphate + adenine. It carries out the reaction cytidine + phosphate = cytosine + alpha-D-ribose 1-phosphate. It catalyses the reaction guanosine + phosphate = alpha-D-ribose 1-phosphate + guanine. The enzyme catalyses inosine + phosphate = alpha-D-ribose 1-phosphate + hypoxanthine. The catalysed reaction is thymidine + phosphate = 2-deoxy-alpha-D-ribose 1-phosphate + thymine. It carries out the reaction uridine + phosphate = alpha-D-ribose 1-phosphate + uracil. It catalyses the reaction xanthosine + phosphate = alpha-D-ribose 1-phosphate + xanthine. In terms of biological role, catalyzes the phosphorolysis of diverse nucleosides, yielding D-ribose 1-phosphate and the respective free bases. Can use uridine, adenosine, guanosine, cytidine, thymidine, inosine and xanthosine as substrates. Also catalyzes the reverse reactions. The polypeptide is Pyrimidine/purine nucleoside phosphorylase (Laribacter hongkongensis (strain HLHK9)).